The sequence spans 296 residues: Nucleotide-binding protein spyM18_0713 (296 aa).

Position 13 to 20 (13 to 20 (GMSGAGKT)) interacts with ATP. Residue 63 to 66 (DMRS) coordinates GTP.

The protein belongs to the RapZ-like family.

Displays ATPase and GTPase activities. The protein is Nucleotide-binding protein spyM18_0713 of Streptococcus pyogenes serotype M18 (strain MGAS8232).